The primary structure comprises 987 residues: Voltage-gated delayed rectifier potassium channel KCNH1 (987 aa).

Over 1–220 the chain is Cytoplasmic; it reads MTMAGGRKGL…LHYCVFKTTW (220 aa). Residues 14–94 form the PAS domain; that stretch reads QNTFLENIVR…QTFENYEMNS (81 aa). A PAC domain is found at 93-145; the sequence is NSFEILMYKKNRTPVWFFVKIAPIRNEQDKVVLFLCTFSDITAFKQPIEDDSC. The interval 151 to 162 is required for phosphatidylinositol bisphosphate binding; the sequence is FARLTRALTSSR. Residues 221–241 traverse the membrane as a helical segment; it reads DWIILILTFYTAILVPYNVSF. At 242-248 the chain is on the extracellular side; sequence KTRQNNV. The helical transmembrane segment at 249–269 threads the bilayer; sequence AWLVVDSIVDVIFLVDIVLNF. Over 270–290 the chain is Cytoplasmic; the sequence is HTTFVGPAGEVISDPKLIRMN. Residues 291–309 form a helical membrane-spanning segment; the sequence is YLKTWFVIDLLSCLPYDVI. The Extracellular portion of the chain corresponds to 310-345; that stretch reads NAFENVDEVSAFMGDPGKIGFADQIPPPLEGRESQG. A helical; Voltage-sensor membrane pass occupies residues 346 to 368; the sequence is ISSLFSSLKVVRLLRLGRVARKL. The Cytoplasmic segment spans residues 369–377; that stretch reads DHYIEYGAA. A helical transmembrane segment spans residues 378–399; that stretch reads VLVLLVCVFGLAAHWMACIWYS. Residues 400–448 lie on the Extracellular side of the membrane; it reads IGDYEIFDEDTKTIRNNSWLYQLAMDIGTPYQFNGSGSGKWEGGPSKNS. Asn415 and Asn433 each carry an N-linked (GlcNAc...) asparagine glycan. Residues 449–470 constitute an intramembrane region (pore-forming); it reads VYISSLYFTMTSLTSVGFGNIA. Positions 463 to 468 match the Selectivity filter motif; sequence SVGFGN. Topologically, residues 471–477 are extracellular; that stretch reads PSTDIEK. A helical transmembrane segment spans residues 478-498; it reads IFAVAIMMIGSLLYATIFGNV. Over 499 to 987 the chain is Cytoplasmic; the sequence is TTIFQQMYAN…ESERDIFGAS (489 aa). The segment at 673–770 is calmodulin-binding; sequence KRDALQKVLE…LDDLDVEKGS (98 aa). Residues 699–701 form an interaction with cyclic nucleotide-binding pocket region; the sequence is YNL. The tract at residues 922-962 is CAD (involved in subunit assembly); that stretch reads AAVLEVKHELKEDIKALSTKMTSIEKQLSEILRILTSRRSS. The interval 960–987 is disordered; it reads RSSQSPQELFEISRPQSPESERDIFGAS. Phosphoserine is present on residues Ser972, Ser976, and Ser979. The segment covering 978-987 has biased composition (basic and acidic residues); sequence ESERDIFGAS.

It belongs to the potassium channel family. H (Eag) (TC 1.A.1.20) subfamily. Kv10.1/KCNH1 sub-subfamily. Homomultimer. The potassium channel is composed of a homo- or heterotetrameric complex of pore-forming alpha subunits that can associate with modulating beta subunits. Heteromultimer with KCNH5/EAG2. Interacts with ALG10B. Interacts with RABEP1. Interacts (via C-terminus) with CTTN. Interacts (via C-terminal cytoplasmic region) with Ca(2+)-bound calmodulin. Channel activity is regulated via tyrosine phosphorylation/dephosphorylation by SRC and PTPN6. As to expression, detected in cerebellum, cortex and retina.

Its subcellular location is the cell membrane. It is found in the nucleus inner membrane. The protein localises to the cell projection. It localises to the dendrite. The protein resides in the axon. Its subcellular location is the presynaptic cell membrane. It is found in the perikaryon. The protein localises to the postsynaptic density membrane. It localises to the early endosome membrane. It catalyses the reaction K(+)(in) = K(+)(out). Its activity is regulated as follows. Channel activity is inhibited by interaction with Ca(2+)-bound calmodulin. Interaction of a single pore-forming alpha subunit with a calmodulin chain is sufficient to promote channel closure. Extracellular magnesium ion concentrations up to 4 mM modulate channel activity by slowing down current activation in a reversible fashion. Channel activity is not regulated by cyclic nucleotides. Channel activity is inhibited by binding intracellular phosphatidylinositol-3,5-bisphosphate and phosphatidylinositol-4,5-bisphosphate (PIP2), but is not inhibited by phosphatidylinositol 4-phosphate. Functionally, pore-forming (alpha) subunit of a voltage-gated delayed rectifier potassium channel that mediates outward-rectifying potassium currents which, on depolarization, reaches a steady-state level and do not inactivate. The activation kinetics depend on the prepulse potential and external divalent cation concentration. With negative prepulses, the current activation is delayed and slowed down several fold, whereas more positive prepulses speed up activation. The time course of activation is biphasic with a fast and a slowly activating current component. Activates at more positive membrane potentials and exhibit a steeper activation curve. Channel properties are modulated by subunit assembly. Mediates IK(NI) current in myoblasts. Involved in the regulation of cell proliferation and differentiation, in particular adipogenic and osteogenic differentiation in bone marrow-derived mesenchymal stem cells (MSCs). This is Voltage-gated delayed rectifier potassium channel KCNH1 from Bos taurus (Bovine).